Consider the following 565-residue polypeptide: MTKSVDDLARGDQAGDEQDPVHREQQTFGDNPLEVRDTDHYMHEYVGGFVDKWDDLIDWKKRYESEGSFFIDQLRARGVETVLDAAAGTGFHSVRLLEEGFETVSADGSPQMLAKAFSNGLAYNGHILRVVNADWRWLNRDVHGEYDAIICLGNSFTHLFSERDRRKTLAEFYAMLKHDGVLIIDQRNYDSILDTGFSSKHTYYYAGEDVSAEPDHIDDGLARFKYTFPDKSEFFLNMYPLRKDYMRRLMREVGFQRIDTYGDFQETYGEDEPDFYIHVAEKSYRTEDEFVDMYSNAVHTARDYYNSEDADNFYYHVWGGNDIHVGLYQTPQEDIATASERTVQRMAGKVDISPETRILDLGAGYGGAARYLARTYGCHVTCLNLSEVENQRNREITRAEGLEHLIEVTDGSFEDLPYQDNAFDVVWSQDSFLHSGDRSRVMEEVTRVLKPKGSVLFTDPMASDSAKKNELGPILDRLHLDSLGSPGFYRKELTRLGLQNIEFEDLSEYLPVHYGRVLEVLESRENELAGFIGEEYRAHMKTGLRNWVQAGNGGSLAWGIIHARA.

A compositionally biased stretch (basic and acidic residues) spans Met-1–Arg-10. A disordered region spans residues Met-1–Glu-34. Residues Tyr-45, Trp-53, Arg-62, Ala-86, Asp-107, Asp-134–Trp-135, and Leu-152 contribute to the S-adenosyl-L-methionine site. The substrate site is built by Asn-154, Arg-187, and Tyr-226.

The protein belongs to the class I-like SAM-binding methyltransferase superfamily. Glycine N-methyltransferase family. As to quaternary structure, monomer.

It carries out the reaction glycine + 2 S-adenosyl-L-methionine = N,N-dimethylglycine + 2 S-adenosyl-L-homocysteine + 2 H(+). The enzyme catalyses sarcosine + 2 S-adenosyl-L-methionine = glycine betaine + 2 S-adenosyl-L-homocysteine + 2 H(+). It catalyses the reaction glycine + S-adenosyl-L-methionine = sarcosine + S-adenosyl-L-homocysteine + H(+). The catalysed reaction is sarcosine + S-adenosyl-L-methionine = N,N-dimethylglycine + S-adenosyl-L-homocysteine + H(+). It carries out the reaction N,N-dimethylglycine + S-adenosyl-L-methionine = glycine betaine + S-adenosyl-L-homocysteine + H(+). It participates in amine and polyamine biosynthesis; betaine biosynthesis via glycine pathway; betaine from glycine: step 1/3. It functions in the pathway amine and polyamine biosynthesis; betaine biosynthesis via glycine pathway; betaine from glycine: step 2/3. Its pathway is amine and polyamine biosynthesis; betaine biosynthesis via glycine pathway; betaine from glycine: step 3/3. Its function is as follows. Catalyzes the methylation of glycine, sarcosine and dimethylglycine to sarcosine, dimethylglycine and betaine, respectively, with S-adenosylmethionine (AdoMet) acting as the methyl donor. Shows low level of activity on glycine when expressed in E.coli. The polypeptide is Glycine/sarcosine/dimethylglycine N-methyltransferase (Actinopolyspora halophila).